A 337-amino-acid chain; its full sequence is Holliday junction branch migration complex subunit RuvB (337 aa).

The interval 4–184 is large ATPase domain (RuvB-L); the sequence is ADRLIQPQVL…FGIPLRLEFY (181 aa). Residues R24, G65, K68, T69, T70, 131-133, R174, Y184, and R221 contribute to the ATP site; that span reads EDY. Residue T69 participates in Mg(2+) binding. Residues 185–255 form a small ATPAse domain (RuvB-S) region; it reads NVKDLCTIVT…VAQQALDMLD (71 aa). The head domain (RuvB-H) stretch occupies residues 258–337; that stretch reads QEGFDYLDRK…FNIITPDVPK (80 aa). DNA is bound by residues R294, R313, and R318.

Belongs to the RuvB family. As to quaternary structure, homohexamer. Forms an RuvA(8)-RuvB(12)-Holliday junction (HJ) complex. HJ DNA is sandwiched between 2 RuvA tetramers; dsDNA enters through RuvA and exits via RuvB. An RuvB hexamer assembles on each DNA strand where it exits the tetramer. Each RuvB hexamer is contacted by two RuvA subunits (via domain III) on 2 adjacent RuvB subunits; this complex drives branch migration. In the full resolvosome a probable DNA-RuvA(4)-RuvB(12)-RuvC(2) complex forms which resolves the HJ.

The protein resides in the cytoplasm. It carries out the reaction ATP + H2O = ADP + phosphate + H(+). Its function is as follows. The RuvA-RuvB-RuvC complex processes Holliday junction (HJ) DNA during genetic recombination and DNA repair, while the RuvA-RuvB complex plays an important role in the rescue of blocked DNA replication forks via replication fork reversal (RFR). RuvA specifically binds to HJ cruciform DNA, conferring on it an open structure. The RuvB hexamer acts as an ATP-dependent pump, pulling dsDNA into and through the RuvAB complex. RuvB forms 2 homohexamers on either side of HJ DNA bound by 1 or 2 RuvA tetramers; 4 subunits per hexamer contact DNA at a time. Coordinated motions by a converter formed by DNA-disengaged RuvB subunits stimulates ATP hydrolysis and nucleotide exchange. Immobilization of the converter enables RuvB to convert the ATP-contained energy into a lever motion, pulling 2 nucleotides of DNA out of the RuvA tetramer per ATP hydrolyzed, thus driving DNA branch migration. The RuvB motors rotate together with the DNA substrate, which together with the progressing nucleotide cycle form the mechanistic basis for DNA recombination by continuous HJ branch migration. Branch migration allows RuvC to scan DNA until it finds its consensus sequence, where it cleaves and resolves cruciform DNA. This Shewanella denitrificans (strain OS217 / ATCC BAA-1090 / DSM 15013) protein is Holliday junction branch migration complex subunit RuvB.